The primary structure comprises 503 residues: ATP synthase subunit alpha (503 aa).

169–176 contacts ATP; that stretch reads GDRKTGKT.

It belongs to the ATPase alpha/beta chains family. F-type ATPases have 2 components, CF(1) - the catalytic core - and CF(0) - the membrane proton channel. CF(1) has five subunits: alpha(3), beta(3), gamma(1), delta(1), epsilon(1). CF(0) has three main subunits: a(1), b(2) and c(9-12). The alpha and beta chains form an alternating ring which encloses part of the gamma chain. CF(1) is attached to CF(0) by a central stalk formed by the gamma and epsilon chains, while a peripheral stalk is formed by the delta and b chains.

The protein localises to the cell membrane. The catalysed reaction is ATP + H2O + 4 H(+)(in) = ADP + phosphate + 5 H(+)(out). Its function is as follows. Produces ATP from ADP in the presence of a proton gradient across the membrane. The alpha chain is a regulatory subunit. This chain is ATP synthase subunit alpha, found in Lactobacillus helveticus (strain DPC 4571).